Here is a 195-residue protein sequence, read N- to C-terminus: Orotate phosphoribosyltransferase (195 aa).

5-phospho-alpha-D-ribose 1-diphosphate-binding positions include Arg87, Lys91, and 112-120 (DDVATTGGS). Residues Thr116 and Arg144 each contribute to the orotate site.

Belongs to the purine/pyrimidine phosphoribosyltransferase family. PyrE subfamily. Homodimer. It depends on Mg(2+) as a cofactor.

It carries out the reaction orotidine 5'-phosphate + diphosphate = orotate + 5-phospho-alpha-D-ribose 1-diphosphate. The protein operates within pyrimidine metabolism; UMP biosynthesis via de novo pathway; UMP from orotate: step 1/2. Catalyzes the transfer of a ribosyl phosphate group from 5-phosphoribose 1-diphosphate to orotate, leading to the formation of orotidine monophosphate (OMP). This Sulfurisphaera tokodaii (strain DSM 16993 / JCM 10545 / NBRC 100140 / 7) (Sulfolobus tokodaii) protein is Orotate phosphoribosyltransferase.